We begin with the raw amino-acid sequence, 147 residues long: Bis(5'-nucleosyl)-tetraphosphatase [asymmetrical] (147 aa).

Residue A2 is modified to N-acetylalanine. A Nudix hydrolase domain is found at 2-139 (ALRACGLIIF…EMKATLQEGH (138 aa)). A Nudix box motif is present at residues 43–64 (GHVDPGENDLETALRETREETG).

Belongs to the Nudix hydrolase family. A divalent metal cation serves as cofactor.

The catalysed reaction is P(1),P(4)-bis(5'-guanosyl) tetraphosphate + H2O = GMP + GTP + 2 H(+). The enzyme catalyses a 5'-end CoA-ribonucleoside in mRNA + H2O = a 5'-end phospho-adenosine-phospho-ribonucleoside in mRNA + (R)-4'-phosphopantetheine + 2 H(+). It carries out the reaction a 5'-end FAD-phospho-ribonucleoside in mRNA + H2O = a 5'-end phospho-adenosine-phospho-ribonucleoside in mRNA + FMN + 2 H(+). Functionally, catalyzes the asymmetric hydrolysis of diadenosine 5',5'''-P1,P4-tetraphosphate (Ap4A) to yield AMP and ATP. Exhibits decapping activity towards FAD-capped RNAs and dpCoA-capped RNAs in vitro. The polypeptide is Bis(5'-nucleosyl)-tetraphosphatase [asymmetrical] (Nudt2) (Mus musculus (Mouse)).